The primary structure comprises 59 residues: Large ribosomal subunit protein bL32 (59 aa).

Residues 1-40 (MAVQQNKKSPSKRGMHRSHDFLRTTPLSVDPGTGEVHLRH) form a disordered region.

The protein belongs to the bacterial ribosomal protein bL32 family.

This is Large ribosomal subunit protein bL32 from Nitrosospira multiformis (strain ATCC 25196 / NCIMB 11849 / C 71).